We begin with the raw amino-acid sequence, 136 residues long: Large-conductance mechanosensitive channel (136 aa).

2 helical membrane passes run alanine 9–phenylalanine 29 and isoleucine 79–isoleucine 99.

This sequence belongs to the MscL family. In terms of assembly, homopentamer.

It is found in the cell inner membrane. Functionally, channel that opens in response to stretch forces in the membrane lipid bilayer. May participate in the regulation of osmotic pressure changes within the cell. In Shewanella sp. (strain ANA-3), this protein is Large-conductance mechanosensitive channel.